The chain runs to 648 residues: Forkhead box protein N1 (648 aa).

The tract at residues 1-95 (MVSLLPPQSD…PGPGSFRLSP (95 aa)) is disordered. Residues 38–50 (APQNKHANFSCSS) are compositionally biased toward polar residues. The segment covering 54 to 67 (DGPPERTPSLPPHS) has biased composition (pro residues). A DNA-binding region (fork-head) is located at residues 271 to 367 (KPIYSYSILI…EELQKWKRKD (97 aa)). Disordered stretches follow at residues 392–432 (LGSP…APGP), 457–521 (HLSP…TLLP), and 629–648 (SAAA…LALA). A compositionally biased stretch (pro residues) spans 398–412 (GCPPPGLAGPGPIRP).

Bone marrow (at protein level). Expressed in thymus and skin.

It localises to the nucleus. Transcriptional regulator which regulates the development, differentiation, and function of thymic epithelial cells (TECs) both in the prenatal and postnatal thymus. Acts as a master regulator of the TECs lineage development and is required from the onset of differentiation in progenitor TECs in the developing fetus to the final differentiation steps through which TECs mature to acquire their full functionality. Regulates, either directly or indirectly the expression of a variety of genes that mediate diverse aspects of thymus development and function, including MHC Class II, DLL4, CCL25, CTSL, CD40 and PAX1. Regulates the differentiation of the immature TECs into functional cortical TECs (cTECs) and medullary TECs (mTECs). Essential for maintenance of mTECs population in the postnatal thymus. Involved in the morphogenesis and maintenance of the three-dimensional thymic microstructure which is necessary for a fully functional thymus. Plays an important role in the maintenance of hematopoiesis and particularly T lineage progenitors within the bone marrow niche with age. Essential for the vascularization of the thymus anlage. Promotes the terminal differentiation of epithelial cells in the epidermis and hair follicles, partly by negatively regulating the activity of protein kinase C. This Mus musculus (Mouse) protein is Forkhead box protein N1 (Foxn1).